The chain runs to 600 residues: Aspartate--tRNA(Asp/Asn) ligase (600 aa).

Glu-187 provides a ligand contact to L-aspartate. Residues 211–214 (QIFK) are aspartate. Arg-233 and His-463 together coordinate L-aspartate. Position 233-235 (233-235 (RDE)) interacts with ATP. ATP is bound at residue Glu-497. Arg-504 serves as a coordination point for L-aspartate. Residue 549-552 (GVDR) coordinates ATP.

The protein belongs to the class-II aminoacyl-tRNA synthetase family. Type 1 subfamily. Homodimer.

Its subcellular location is the cytoplasm. The enzyme catalyses tRNA(Asx) + L-aspartate + ATP = L-aspartyl-tRNA(Asx) + AMP + diphosphate. Its function is as follows. Aspartyl-tRNA synthetase with relaxed tRNA specificity since it is able to aspartylate not only its cognate tRNA(Asp) but also tRNA(Asn). Reaction proceeds in two steps: L-aspartate is first activated by ATP to form Asp-AMP and then transferred to the acceptor end of tRNA(Asp/Asn). The sequence is that of Aspartate--tRNA(Asp/Asn) ligase from Wolbachia pipientis wMel.